We begin with the raw amino-acid sequence, 263 residues long: Glucosamine-6-phosphate deaminase (263 aa).

The active-site Proton acceptor; for enolization step is Asp72. Residue Asp141 is the For ring-opening step of the active site. His143 (proton acceptor; for ring-opening step) is an active-site residue. Catalysis depends on Glu148, which acts as the For ring-opening step.

The protein belongs to the glucosamine/galactosamine-6-phosphate isomerase family. NagB subfamily.

The catalysed reaction is alpha-D-glucosamine 6-phosphate + H2O = beta-D-fructose 6-phosphate + NH4(+). Its pathway is amino-sugar metabolism; N-acetylneuraminate degradation; D-fructose 6-phosphate from N-acetylneuraminate: step 5/5. Allosterically activated by N-acetylglucosamine 6-phosphate (GlcNAc6P). Catalyzes the reversible isomerization-deamination of glucosamine 6-phosphate (GlcN6P) to form fructose 6-phosphate (Fru6P) and ammonium ion. The protein is Glucosamine-6-phosphate deaminase of Porphyromonas gingivalis (strain ATCC 33277 / DSM 20709 / CIP 103683 / JCM 12257 / NCTC 11834 / 2561).